The primary structure comprises 511 residues: Maturase K (511 aa).

It belongs to the intron maturase 2 family. MatK subfamily.

The protein resides in the plastid. The protein localises to the chloroplast. Functionally, usually encoded in the trnK tRNA gene intron. Probably assists in splicing its own and other chloroplast group II introns. The sequence is that of Maturase K from Hordeum vulgare (Barley).